The primary structure comprises 220 residues: Thioredoxin domain-containing protein (220 aa).

An N-terminal signal peptide occupies residues 1 to 19; that stretch reads MKFLILNCLILFSLISSEA. In terms of domain architecture, Thioredoxin spans 20 to 141; it reads TNVKLDREDQ…SEFALGDFKN (122 aa). At 20–181 the chain is on the lumenal side; that stretch reads TNVKLDREDQ…YDAALAGFVT (162 aa). C64 and C67 are disulfide-bonded. Residues 182-202 traverse the membrane as a helical segment; the sequence is ISSFSFLFGLLVGLMLSLFLF. The Cytoplasmic portion of the chain corresponds to 203–220; sequence TRRATRKPKVLTERKKDK. The Di-lysine motif motif lies at 217–220; sequence KKDK.

The protein belongs to the protein disulfide isomerase family.

It is found in the endoplasmic reticulum membrane. This chain is Thioredoxin domain-containing protein, found in Theileria parva (East coast fever infection agent).